Consider the following 328-residue polypeptide: MINIAIDAMGGDFGEKPIIEGVLKALEAKPFNAILVGNSKILKPLIPKKLEQYIQYEEASEIFSMNENATDALKNKETTIYKAINLLKEKKVDAVVSAGHSGASMSLATLRLGRLKGISRPAIATLMPNIVNKTLLLDVGANTDCKAENLFQFAIMGEVYAREIMQIQKPRLALLSNGEEECKGNELTKESHQLMKKIPNFIGNAEGRDIFNGEIDVLVCDGFDGNVILKACEGVATAIFQLLKNEVKQSFISKIGALLMKPSFKKLKKHTDWQEYGGAPLLGVNGCVIISHGKSDSRAIKNAIFQAINFSQSHINKLIENELGKYNA.

It belongs to the PlsX family. In terms of assembly, homodimer. Probably interacts with PlsY.

Its subcellular location is the cytoplasm. It carries out the reaction a fatty acyl-[ACP] + phosphate = an acyl phosphate + holo-[ACP]. Its pathway is lipid metabolism; phospholipid metabolism. In terms of biological role, catalyzes the reversible formation of acyl-phosphate (acyl-PO(4)) from acyl-[acyl-carrier-protein] (acyl-ACP). This enzyme utilizes acyl-ACP as fatty acyl donor, but not acyl-CoA. The sequence is that of Phosphate acyltransferase from Campylobacter jejuni subsp. jejuni serotype O:23/36 (strain 81-176).